A 1000-amino-acid chain; its full sequence is C2 domain-containing protein 5 (1000 aa).

The 109-residue stretch at 1–109 (MPGKLKVKIV…EAATVISGWF (109 aa)) folds into the C2 domain. Residues Asp-19, Asp-26, Asp-76, Asp-78, Ser-81, and Asp-84 each contribute to the Ca(2+) site. Ser-197 bears the Phosphoserine; by PKB/AKT2 mark. Phosphoserine is present on residues Ser-200 and Ser-260. The segment at 265–330 (MKEIPFNEDP…SGSAGKEGGP (66 aa)) is disordered. Over residues 274-289 (PNPNTHSSGPSTPLKN) the composition is skewed to polar residues. Low complexity predominate over residues 290-318 (QTYSFSPSKSYSRQSSSSDTDLSLTPKTG). 5 positions are modified to phosphoserine: Ser-293, Ser-295, Ser-304, Ser-305, and Ser-306. Thr-317 is subject to Phosphothreonine. Residues 319 to 328 (MGSGSAGKEG) show a composition bias toward gly residues. The residue at position 323 (Ser-323) is a Phosphoserine. Thr-601 is subject to Phosphothreonine. A disordered region spans residues 639–669 (EIIGSPIPEPRQRSRLLRSQSESSDEVTELD). Phosphoserine occurs at positions 643, 657, 659, 661, and 662. Thr-666 bears the Phosphothreonine mark. Ser-671 carries the phosphoserine modification. Residue Thr-807 is modified to Phosphothreonine. Phosphoserine occurs at positions 817 and 852.

Ca(2+) serves as cofactor. Phosphorylated on Ser-197 by active myristoylated kinase AKT2; insulin-stimulated phosphorylation by AKT2 regulates SLC2A4/GLUT4 translocation into the plasma membrane.

It localises to the cytoplasmic vesicle membrane. The protein resides in the cytoplasm. Its subcellular location is the cell cortex. It is found in the cell membrane. The protein localises to the cell projection. It localises to the ruffle. Required for insulin-stimulated glucose transport and glucose transporter SLC2A4/GLUT4 translocation from intracellular glucose storage vesicle (GSV) to the plasma membrane (PM) in adipocytes. Binds phospholipid membranes in a calcium-dependent manner and is necessary for the optimal membrane fusion between SLC2A4/GLUT4 GSV and the PM. In Homo sapiens (Human), this protein is C2 domain-containing protein 5 (C2CD5).